A 279-amino-acid chain; its full sequence is Ribonuclease T2 protein rnst-2 (279 aa).

Positions 1–17 are cleaved as a signal peptide; sequence MKLLLLLCISCIPLAYS. Cys-37 and Cys-48 are oxidised to a cystine. His-60 is an active-site residue. Asn-68 carries N-linked (GlcNAc...) asparagine glycosylation. Catalysis depends on residues Glu-114 and His-118. Cys-200 and Cys-210 are oxidised to a cystine.

This sequence belongs to the RNase T2 family. In terms of tissue distribution, expressed in the pharynx, hypodermis, muscle cells, sheath cells, intestinal cells, the vulva and tail regions.

The protein resides in the lysosome. The enzyme catalyses a ribonucleotidyl-ribonucleotide-RNA + H2O = a 3'-end 3'-phospho-ribonucleotide-RNA + a 5'-end dephospho-ribonucleoside-RNA + H(+). Probable endoribonuclease involved in the autophagy-mediated degradation of ribosomal RNA and ribosomal proteins in lysosomes. This Caenorhabditis elegans protein is Ribonuclease T2 protein rnst-2.